The chain runs to 74 residues: MKNTINIQDQFLNQLRKEETTVTVFLLNGFQLRGLVKGFDNFTVLLEVDGRQQLIYKHAISTFAPQKNVKIEIE.

The region spanning 9–69 (DQFLNQLRKE…ISTFAPQKNV (61 aa)) is the Sm domain.

Belongs to the Hfq family. Homohexamer.

RNA chaperone that binds small regulatory RNA (sRNAs) and mRNAs to facilitate mRNA translational regulation in response to envelope stress, environmental stress and changes in metabolite concentrations. Also binds with high specificity to tRNAs. The sequence is that of RNA-binding protein Hfq from Anoxybacillus flavithermus (strain DSM 21510 / WK1).